Reading from the N-terminus, the 473-residue chain is Ribulose bisphosphate carboxylase large chain (473 aa).

2 residues coordinate substrate: Asn116 and Thr166. Residue Lys168 is the Proton acceptor of the active site. Lys170 provides a ligand contact to substrate. Residues Lys194, Asp196, and Glu197 each contribute to the Mg(2+) site. At Lys194 the chain carries N6-carboxylysine. Catalysis depends on His287, which acts as the Proton acceptor. The substrate site is built by Arg288, His320, and Ser372.

It belongs to the RuBisCO large chain family. Type I subfamily. As to quaternary structure, heterohexadecamer of 8 large chains and 8 small chains. Mg(2+) serves as cofactor.

The catalysed reaction is 2 (2R)-3-phosphoglycerate + 2 H(+) = D-ribulose 1,5-bisphosphate + CO2 + H2O. It catalyses the reaction D-ribulose 1,5-bisphosphate + O2 = 2-phosphoglycolate + (2R)-3-phosphoglycerate + 2 H(+). Functionally, ruBisCO catalyzes two reactions: the carboxylation of D-ribulose 1,5-bisphosphate, the primary event in carbon dioxide fixation, as well as the oxidative fragmentation of the pentose substrate. Both reactions occur simultaneously and in competition at the same active site. In Thiomonas intermedia (strain K12) (Thiobacillus intermedius), this protein is Ribulose bisphosphate carboxylase large chain.